Here is a 162-residue protein sequence, read N- to C-terminus: Cyclic pyranopterin monophosphate synthase (162 aa).

Residues 75 to 77 (LCH) and 113 to 114 (ME) each bind substrate. Aspartate 128 is a catalytic residue.

Belongs to the MoaC family. In terms of assembly, homohexamer; trimer of dimers.

It catalyses the reaction (8S)-3',8-cyclo-7,8-dihydroguanosine 5'-triphosphate = cyclic pyranopterin phosphate + diphosphate. Its pathway is cofactor biosynthesis; molybdopterin biosynthesis. In terms of biological role, catalyzes the conversion of (8S)-3',8-cyclo-7,8-dihydroguanosine 5'-triphosphate to cyclic pyranopterin monophosphate (cPMP). This Burkholderia ambifaria (strain ATCC BAA-244 / DSM 16087 / CCUG 44356 / LMG 19182 / AMMD) (Burkholderia cepacia (strain AMMD)) protein is Cyclic pyranopterin monophosphate synthase.